We begin with the raw amino-acid sequence, 254 residues long: NH(3)-dependent NAD(+) synthetase (254 aa).

32–39 (GISGGVDS) contacts ATP. Aspartate 38 contacts Mg(2+). A deamido-NAD(+)-binding site is contributed by arginine 113. Residue threonine 133 coordinates ATP. Mg(2+) is bound at residue glutamate 138. 2 residues coordinate deamido-NAD(+): lysine 146 and aspartate 153. ATP contacts are provided by lysine 162 and serine 184. 244-245 (HK) lines the deamido-NAD(+) pocket.

Belongs to the NAD synthetase family. As to quaternary structure, homodimer.

The enzyme catalyses deamido-NAD(+) + NH4(+) + ATP = AMP + diphosphate + NAD(+) + H(+). It participates in cofactor biosynthesis; NAD(+) biosynthesis; NAD(+) from deamido-NAD(+) (ammonia route): step 1/1. Catalyzes the ATP-dependent amidation of deamido-NAD to form NAD. Uses ammonia as a nitrogen source. This is NH(3)-dependent NAD(+) synthetase from Thermococcus sibiricus (strain DSM 12597 / MM 739).